Here is a 416-residue protein sequence, read N- to C-terminus: Gamma-glutamyl phosphate reductase (416 aa).

It belongs to the gamma-glutamyl phosphate reductase family.

It is found in the cytoplasm. It catalyses the reaction L-glutamate 5-semialdehyde + phosphate + NADP(+) = L-glutamyl 5-phosphate + NADPH + H(+). The protein operates within amino-acid biosynthesis; L-proline biosynthesis; L-glutamate 5-semialdehyde from L-glutamate: step 2/2. Its function is as follows. Catalyzes the NADPH-dependent reduction of L-glutamate 5-phosphate into L-glutamate 5-semialdehyde and phosphate. The product spontaneously undergoes cyclization to form 1-pyrroline-5-carboxylate. The chain is Gamma-glutamyl phosphate reductase from Vibrio vulnificus (strain YJ016).